A 452-amino-acid chain; its full sequence is Mitochondrial import inner membrane translocase subunit TIM44 (452 aa).

T128 is modified (phosphothreonine). 166–173 lines the ATP pocket; the sequence is GGEKLGRT. At S180 the chain carries Phosphoserine. K217 carries the post-translational modification N6-succinyllysine.

This sequence belongs to the Tim44 family. As to quaternary structure, probable component of the PAM complex at least composed of a mitochondrial HSP70 protein, GRPEL1 or GRPEL2, TIMM44, TIMM16/PAM16 and TIMM14/DNAJC19. The complex interacts with the TIMM23 component of the TIM23 complex. Interacts with SLC25A4/ANT1 and SLC25A5/ANT2; leading to inhibit the presequence translocase TIMM23, thereby promoting stabilization of PINK1.

It is found in the mitochondrion inner membrane. Its subcellular location is the mitochondrion matrix. In terms of biological role, essential component of the PAM complex, a complex required for the translocation of transit peptide-containing proteins from the inner membrane into the mitochondrial matrix in an ATP-dependent manner. Recruits mitochondrial HSP70 to drive protein translocation into the matrix using ATP as an energy source. This chain is Mitochondrial import inner membrane translocase subunit TIM44 (TIMM44), found in Homo sapiens (Human).